A 319-amino-acid chain; its full sequence is Coiled-coil domain-containing protein 149 (319 aa).

Coiled-coil stretches lie at residues 1–199 (MANQ…RKNS) and 259–286 (IQHQ…LEVS). Residues 298–318 (VSIGFGSMFFLKYLCLWLIAV) form a helical membrane-spanning segment.

This sequence belongs to the CCDC149 family.

The protein localises to the membrane. In Bos taurus (Bovine), this protein is Coiled-coil domain-containing protein 149 (CCDC149).